Here is a 695-residue protein sequence, read N- to C-terminus: MALLLVALLAFLSLGSGCHHRLCHCSNGVFLCQESKVTEIPSDLPRDAVELRFVLTKLRVIPKGAFSGFGDLEKIEISQNDVLEVIEANVFSNLPKLHEIRIEKANNLLYIDPDAFQNLPNLRYLLISNTGIKHLPAVHKIQSLQKVLLDIQDNINIHTVERNSFMGLSFESMTVWLSKNGIQEIHNCAFNGTQLDELNLSDNSNLEELPNDVFQGASGPVILDISRTRIRSLPSYGLENLKKLRAKSTYRLKKLPSLEKFVTLVEASLTYPSHCCAFANWRRQTSDLHPICNKSILRQEVDDMTQARGQRVSLAEDDEPSYAKGFDVMYSEFDYDLCNEVVDVTCSPEPDAFNPCEDIMGDDILRVLIWFISILAITGNILVLVILITSQYKLTVPRFLMCNLAFADLCIGIYLLLIASVDVHTKTEYHNYAIDWQTGAGCDAAGFFTVFASELSVYTLTAITLERWHTITHAMQLECKVQLRHAASIMLVGWIFAFAVALFPIFGISSYMKVSICLPMDIDSPLSQLYVMSLLVLNVLAFVVICGCYTHIYLTVRNPNITSSSSDTKIAKRMAMLIFTDFLCMAPISFFAISASLKVPLITVSKSKILLVLFYPINSCANPFLYAIFTKNFRRDFFILLSKFGCYEVQAQTYRSETSSTAHNFHPRNGHCPPAPRVTNGSNYTLIPLRHLAKN.

Residues 1 to 17 (MALLLVALLAFLSLGSG) form the signal peptide. Intrachain disulfides connect cysteine 18-cysteine 25 and cysteine 23-cysteine 32. The 29-residue stretch at 18–46 (CHHRLCHCSNGVFLCQESKVTEIPSDLPR) folds into the LRRNT domain. Residues 18-366 (CHHRLCHCSN…EDIMGDDILR (349 aa)) lie on the Extracellular side of the membrane. LRR repeat units follow at residues 49–72 (VELRFVLTKLRVIPKGAFSGFGDL), 73–97 (EKIEISQNDVLEVIEANVFSNLPKL), 98–118 (HEIRIEKANNLLYIDPDAFQN), 119–143 (LPNLRYLLISNTGIKHLPAVHKIQS), 144–169 (LQKVLLDIQDNINIHTVERNSFMGLS), 170–192 (FESMTVWLSKNGIQEIHNCAFNG), 193–216 (TQLDELNLSDNSNLEELPNDVFQG), 217–240 (ASGPVILDISRTRIRSLPSYGLEN), and 241–259 (LKKLRAKSTYRLKKLPSLE). 2 N-linked (GlcNAc...) asparagine glycosylation sites follow: asparagine 191 and asparagine 199. Cystine bridges form between cysteine 275–cysteine 346, cysteine 276–cysteine 292, cysteine 276–cysteine 356, and cysteine 292–cysteine 338. An N-linked (GlcNAc...) asparagine glycan is attached at asparagine 293. Tyrosine 335 carries the post-translational modification Sulfotyrosine. A helical transmembrane segment spans residues 367–387 (VLIWFISILAITGNILVLVIL). Over 388–398 (ITSQYKLTVPR) the chain is Cytoplasmic. A helical membrane pass occupies residues 399–421 (FLMCNLAFADLCIGIYLLLIASV). Over 422–443 (DVHTKTEYHNYAIDWQTGAGCD) the chain is Extracellular. Cysteine 442 and cysteine 517 are oxidised to a cystine. A helical membrane pass occupies residues 444 to 465 (AAGFFTVFASELSVYTLTAITL). At 466–485 (ERWHTITHAMQLECKVQLRH) the chain is on the cytoplasmic side. Residues 486-508 (AASIMLVGWIFAFAVALFPIFGI) traverse the membrane as a helical segment. Residues 509-528 (SSYMKVSICLPMDIDSPLSQ) are Extracellular-facing. The helical transmembrane segment at 529–550 (LYVMSLLVLNVLAFVVICGCYT) threads the bilayer. The Cytoplasmic segment spans residues 551-573 (HIYLTVRNPNITSSSSDTKIAKR). The chain crosses the membrane as a helical span at residues 574–597 (MAMLIFTDFLCMAPISFFAISASL). Residues 598–608 (KVPLITVSKSK) lie on the Extracellular side of the membrane. Residues 609 to 630 (ILLVLFYPINSCANPFLYAIFT) form a helical membrane-spanning segment. At 631–695 (KNFRRDFFIL…LIPLRHLAKN (65 aa)) the chain is on the cytoplasmic side.

This sequence belongs to the G-protein coupled receptor 1 family. FSH/LSH/TSH subfamily. As to quaternary structure, homotrimer. Functions as a homotrimer binding the FSH hormone heterodimer composed of CGA and FSHB. Interacts with ARRB2. Interacts with APPL2; interaction is independent of follicle stimulating hormone stimulation. In terms of processing, N-glycosylated; indirectly required for FSH-binding, possibly via a conformational change that allows high affinity binding of hormone. Sulfated.

It is found in the cell membrane. G protein-coupled receptor for follitropin, the follicle-stimulating hormone. Through cAMP production activates the downstream PI3K-AKT and ERK1/ERK2 signaling pathways. This Bos taurus (Bovine) protein is Follicle-stimulating hormone receptor (FSHR).